The primary structure comprises 59 residues: uncharacterized protein (59 aa).

The chain crosses the membrane as a helical span at residues 6–26 (WWLVVFAVFVFLFDTLLMQWI).

The protein resides in the membrane. This is an uncharacterized protein from Escherichia coli O157:H7.